A 716-amino-acid chain; its full sequence is Fatty acid oxidation complex subunit alpha (716 aa).

The enoyl-CoA hydratase/isomerase stretch occupies residues Met1–Ala189. A substrate-binding site is contributed by Asp296. The interval Lys311–Ser716 is 3-hydroxyacyl-CoA dehydrogenase. Residues Met324, Asp343, Val400–Glu402, Lys407, and Ser429 contribute to the NAD(+) site. The For 3-hydroxyacyl-CoA dehydrogenase activity role is filled by His450. Residue Asn453 coordinates NAD(+). Residue Asn500 participates in substrate binding.

It in the N-terminal section; belongs to the enoyl-CoA hydratase/isomerase family. The protein in the C-terminal section; belongs to the 3-hydroxyacyl-CoA dehydrogenase family. As to quaternary structure, heterotetramer of two alpha chains (FadB) and two beta chains (FadA).

It catalyses the reaction a (3S)-3-hydroxyacyl-CoA + NAD(+) = a 3-oxoacyl-CoA + NADH + H(+). It carries out the reaction a (3S)-3-hydroxyacyl-CoA = a (2E)-enoyl-CoA + H2O. The enzyme catalyses a 4-saturated-(3S)-3-hydroxyacyl-CoA = a (3E)-enoyl-CoA + H2O. The catalysed reaction is (3S)-3-hydroxybutanoyl-CoA = (3R)-3-hydroxybutanoyl-CoA. It catalyses the reaction a (3Z)-enoyl-CoA = a 4-saturated (2E)-enoyl-CoA. It carries out the reaction a (3E)-enoyl-CoA = a 4-saturated (2E)-enoyl-CoA. The protein operates within lipid metabolism; fatty acid beta-oxidation. Involved in the aerobic and anaerobic degradation of long-chain fatty acids via beta-oxidation cycle. Catalyzes the formation of 3-oxoacyl-CoA from enoyl-CoA via L-3-hydroxyacyl-CoA. It can also use D-3-hydroxyacyl-CoA and cis-3-enoyl-CoA as substrate. The polypeptide is Fatty acid oxidation complex subunit alpha (Shewanella sediminis (strain HAW-EB3)).